Reading from the N-terminus, the 123-residue chain is MLEILLVFLGGGLGSIARYLMGQLMTIHFPNILSLGTFTVNIIGSFIIGLVISLINKNQWNPQIGLLLATGFCGGFTTFSSFSYENTAYLKNNDYLLSFGYTIMSLFWGFAATFLGIYLVKRG.

The next 4 membrane-spanning stretches (helical) occupy residues 1-21, 32-52, 64-84, and 99-119; these read MLEI…RYLM, ILSL…GLVI, IGLL…SFSY, and FGYT…GIYL. Residues G74 and T77 each coordinate Na(+).

Belongs to the fluoride channel Fluc/FEX (TC 1.A.43) family.

Its subcellular location is the cell inner membrane. It carries out the reaction fluoride(in) = fluoride(out). Na(+) is not transported, but it plays an essential structural role and its presence is essential for fluoride channel function. Fluoride-specific ion channel. Important for reducing fluoride concentration in the cell, thus reducing its toxicity. The protein is Fluoride-specific ion channel FluC of Gloeothece citriformis (strain PCC 7424) (Cyanothece sp. (strain PCC 7424)).